We begin with the raw amino-acid sequence, 22 residues long: Superoxide dismutase [Cu-Zn] 2 (22 aa).

It belongs to the Cu-Zn superoxide dismutase family. Homodimer. Cu cation serves as cofactor. Zn(2+) is required as a cofactor. As to expression, dominant isozyme in roots.

The protein resides in the cytoplasm. It catalyses the reaction 2 superoxide + 2 H(+) = H2O2 + O2. Functionally, destroys radicals which are normally produced within the cells and which are toxic to biological systems. The chain is Superoxide dismutase [Cu-Zn] 2 from Picea abies (Norway spruce).